The chain runs to 133 residues: Putative biopolymer transport protein ExbD-like 2 (133 aa).

The Cytoplasmic portion of the chain corresponds to 1-9 (MKKVESMNV). A helical transmembrane segment spans residues 10 to 30 (VPFIDIMLVLLVIVLTTASFV). The Periplasmic portion of the chain corresponds to 31–133 (QTSKLPISIP…LVEDKKNQKN (103 aa)).

Belongs to the ExbD/TolR family.

The protein localises to the cell inner membrane. This is Putative biopolymer transport protein ExbD-like 2 from Helicobacter pylori (strain J99 / ATCC 700824) (Campylobacter pylori J99).